A 1288-amino-acid polypeptide reads, in one-letter code: Peroxidasin homolog (1288 aa).

A signal peptide spans 1 to 16 (MNLLLYLLLLVPWVLG). Residues 17–51 (SEDGCPAKCTCDKKGFTVDCSNAGLTRIPKGISSN) enclose the LRRNT domain. LRR repeat units follow at residues 27–49 (CDKK…KGIS), 50–72 (SNVR…DLEG), 73–96 (FPLL…ILDH), 97–120 (LPEL…ASES), 122–143 (PLAS…WLLQ), 145–168 (FPEL…LFEN), and 204–227 (AYCT…LLKC). Residues 180 to 228 (NPWNCDCRVTKVKALLRKVEWERKAYCTNPVELRHQAIDEVEESLLKCA) form the LRRCT domain. N-linked (GlcNAc...) asparagine glycosylation is present at N247. The disordered stretch occupies residues 304–323 (LRQSHHSNGAPQFTYKPRDN). 2 consecutive Ig-like C2-type domains span residues 314 to 400 (PQFT…FSLD) and 407 to 494 (PNIY…AKLT). A disulfide bridge links C335 with C384. LRR repeat units lie at residues 356–381 (SSRK…DSGR) and 387–412 (VNSL…IYEG). A disulfide bridge links C428 with C478. A glycan (N-linked (GlcNAc...) asparagine) is linked at N594. An intrachain disulfide couples C624 to C640. D718 is a heme b binding site. Residue H719 is the Proton acceptor of the active site. D720 is a binding site for Ca(2+). Cystine bridges form between C739–C749 and C743–C770. N740 carries N-linked (GlcNAc...) asparagine glycosylation. Ca(2+) is bound by residues T802, F804, D806, and S808. An N-linked (GlcNAc...) asparagine glycan is attached at N857. Heme b contacts are provided by E876 and H972. LRR repeat units lie at residues 998 to 1022 (KAFF…LFAS) and 1049 to 1073 (SLDL…EYRQ). Disulfide bonds link C1075-C1132 and C1173-C1200. The stretch at 1168-1189 (LARLLCDNGDEIDRIQKDVFMY) is one LRR 12 repeat.

The protein belongs to the peroxidase family. XPO subfamily. Requires Ca(2+) as cofactor. Heme b serves as cofactor.

The protein resides in the secreted. Its subcellular location is the extracellular space. It is found in the extracellular matrix. It catalyses the reaction L-lysyl-[collagen] + L-methionyl-[collagen] + H2O2 = [collagen]-L-lysyl-N-S-L-methionyl-[collagen] + 2 H2O + H(+). The catalysed reaction is bromide + H2O2 = hypobromite + H2O. It carries out the reaction L-lysyl-[collagen] + L-methionyl-[collagen] + hypobromite = [collagen]-L-lysyl-N-S-L-methionyl-[collagen] + bromide + H2O + H(+). The enzyme catalyses L-tyrosyl-[protein] + bromide + H2O2 + H(+) = 3-bromo-L-tyrosyl-[protein] + 2 H2O. It catalyses the reaction hypobromite + L-tyrosyl-[protein] + H(+) = 3-bromo-L-tyrosyl-[protein] + H2O. In terms of biological role, catalyzes the two-electron oxidation of bromide by hydrogen peroxide and generates hypobromite as a reactive intermediate which mediates the formation of sulfilimine cross-links between methionine and hydroxylysine residues within an uncross-linked collagen IV NC1 hexamer. Plays a role in the attachment of tissues and in axonal guidance during early developmental stages. May functionally antagonize the peroxidasin pxn-2 to maintain neuronal development. This chain is Peroxidasin homolog, found in Caenorhabditis briggsae.